Reading from the N-terminus, the 226-residue chain is ATP synthase subunit a (226 aa).

The next 6 helical transmembrane spans lie at 17–37, 79–99, 105–125, 134–154, 176–196, and 199–219; these read FSYF…AMMA, LVAT…IPGF, SLNL…FEGI, FAHF…IEIV, LFLM…AYVL, and FMAF…LAGA.

The protein belongs to the ATPase A chain family. In terms of assembly, F-type ATPases have 2 components, CF(1) - the catalytic core - and CF(0) - the membrane proton channel. CF(1) has five subunits: alpha(3), beta(3), gamma(1), delta(1), epsilon(1). CF(0) has three main subunits: a(1), b(2) and c(9-12). The alpha and beta chains form an alternating ring which encloses part of the gamma chain. CF(1) is attached to CF(0) by a central stalk formed by the gamma and epsilon chains, while a peripheral stalk is formed by the delta and b chains.

It is found in the cell inner membrane. Functionally, key component of the proton channel; it plays a direct role in the translocation of protons across the membrane. In Campylobacter jejuni subsp. jejuni serotype O:6 (strain 81116 / NCTC 11828), this protein is ATP synthase subunit a.